A 203-amino-acid polypeptide reads, in one-letter code: Glycerol-3-phosphate acyltransferase (203 aa).

Transmembrane regions (helical) follow at residues 10 to 30 (LLLGLTALLAYLLGSVPFGIM), 60 to 80 (LAAFLTLVLDAGKGAIAVFLA), 88 to 108 (AAQLAGFAAFLGHCFPVFLGF), 118 to 138 (LGTLLALAWPIGLAACAIWAI), and 162 to 182 (FTLGLPSAVVFCAALATLIFL).

Belongs to the PlsY family. In terms of assembly, probably interacts with PlsX.

It localises to the cell inner membrane. It catalyses the reaction an acyl phosphate + sn-glycerol 3-phosphate = a 1-acyl-sn-glycero-3-phosphate + phosphate. It functions in the pathway lipid metabolism; phospholipid metabolism. In terms of biological role, catalyzes the transfer of an acyl group from acyl-phosphate (acyl-PO(4)) to glycerol-3-phosphate (G3P) to form lysophosphatidic acid (LPA). This enzyme utilizes acyl-phosphate as fatty acyl donor, but not acyl-CoA or acyl-ACP. This chain is Glycerol-3-phosphate acyltransferase, found in Jannaschia sp. (strain CCS1).